We begin with the raw amino-acid sequence, 92 residues long: Small ribosomal subunit protein uS19 (92 aa).

Belongs to the universal ribosomal protein uS19 family.

Its function is as follows. Protein S19 forms a complex with S13 that binds strongly to the 16S ribosomal RNA. The protein is Small ribosomal subunit protein uS19 of Borrelia duttonii (strain Ly).